The chain runs to 472 residues: Putative ankyrin repeat protein L675 (472 aa).

ANK repeat units lie at residues 125-156 (YKANRFYLGEKFDLGDVEVVKFFIKKGTDIHL), 187-216 (DNFKVLAKICRDGNLELLRLLELNGFNETI), 265-295 (YKTKVLLMAIANNHAELVQYLLTQNPSDKDI), 297-323 (HAMLYAVTTANASLLDYTLKNGGNIHY), 325-351 (NDQALILAVRFNHISMVRKLICLGMDS), 352-381 (NNVFALTMAAENNHQDIVQHLINRGADVNA), 382-411 (NNRSALIAAVKNGHLKIVQMFVNNGADIKI), and 413-440 (DTVIKTACKNGHNNIVKYLLGKGVSCDD).

The protein is Putative ankyrin repeat protein L675 of Acanthamoeba polyphaga (Amoeba).